Reading from the N-terminus, the 76-residue chain is ATP synthase subunit 9, mitochondrial (76 aa).

2 consecutive transmembrane segments (helical) span residues 14-34 (ISTI…AALI) and 56-76 (ALSE…LFAV).

Belongs to the ATPase C chain family. F-type ATPases have 2 components, CF(1) - the catalytic core - and CF(0) - the membrane proton channel. CF(1) has five subunits: alpha(3), beta(3), gamma(1), delta(1), epsilon(1). CF(0) has three main subunits: a, b and c.

It is found in the mitochondrion membrane. Functionally, mitochondrial membrane ATP synthase (F(1)F(0) ATP synthase or Complex V) produces ATP from ADP in the presence of a proton gradient across the membrane which is generated by electron transport complexes of the respiratory chain. F-type ATPases consist of two structural domains, F(1) - containing the extramembraneous catalytic core and F(0) - containing the membrane proton channel, linked together by a central stalk and a peripheral stalk. During catalysis, ATP synthesis in the catalytic domain of F(1) is coupled via a rotary mechanism of the central stalk subunits to proton translocation. Part of the complex F(0) domain. A homomeric c-ring of probably 10 subunits is part of the complex rotary element. This Candida glabrata (strain ATCC 2001 / BCRC 20586 / JCM 3761 / NBRC 0622 / NRRL Y-65 / CBS 138) (Yeast) protein is ATP synthase subunit 9, mitochondrial (ATP9).